The sequence spans 62 residues: uncharacterized protein (62 aa).

Positions 28–61 (KIESTHPEIAKKLKEAAEKYREVEEILKKAVDMV) form a coiled coil.

This is an uncharacterized protein from Archaeoglobus fulgidus (strain ATCC 49558 / DSM 4304 / JCM 9628 / NBRC 100126 / VC-16).